We begin with the raw amino-acid sequence, 350 residues long: Phosphoribosylformylglycinamidine cyclo-ligase (350 aa).

Belongs to the AIR synthase family.

The protein localises to the cytoplasm. It carries out the reaction 2-formamido-N(1)-(5-O-phospho-beta-D-ribosyl)acetamidine + ATP = 5-amino-1-(5-phospho-beta-D-ribosyl)imidazole + ADP + phosphate + H(+). It functions in the pathway purine metabolism; IMP biosynthesis via de novo pathway; 5-amino-1-(5-phospho-D-ribosyl)imidazole from N(2)-formyl-N(1)-(5-phospho-D-ribosyl)glycinamide: step 2/2. The protein is Phosphoribosylformylglycinamidine cyclo-ligase of Cupriavidus metallidurans (strain ATCC 43123 / DSM 2839 / NBRC 102507 / CH34) (Ralstonia metallidurans).